The primary structure comprises 1430 residues: rRNA biogenesis protein RRP5 (1430 aa).

6 consecutive S1 motif domains span residues 74-160 (DMLV…LSLK), 176-238 (GFIF…CTCV), 261-329 (GSIV…LTLN), 447-511 (GDLV…VSNR), 531-592 (GNVY…LTLP), and 697-771 (QVGD…VSAK). Positions 1041 to 1145 (KITNGQKKTQ…AKEKAKAEIK (105 aa)) are disordered. The segment covering 1043–1053 (TNGQKKTQPLT) has biased composition (polar residues). Basic and acidic residues-rich tracts occupy residues 1057–1082 (VKEKPKQNGKLFFEDKTPAKNAKSET) and 1135–1145 (SAKEKAKAEIK). A coiled-coil region spans residues 1119 to 1157 (LNVAETQKNAAKKKRLSAKEKAKAEIKEEQRLREIEERN). HAT repeat units lie at residues 1161 to 1193 (KARLETIDQYERLVIAQPNNSISWLKYIAFLLS), 1195 to 1232 (TEIEKARALARRAISTISFRETQELRNMWSALLNMELV), 1265 to 1297 (KRKDRLSSVLTTVLNKFKTELRVWPVAAEAYFW), 1299 to 1333 (GKSDQVHNLLQRALRALPNQEHIPCIVSFAKLYAK), 1335 to 1367 (DNNDMAQTLLDDVVTSYPKRIDIWSVYVDMLIK), and 1369 to 1404 (GLIDSARNVLERAVVQKLKPNKMQVIYKKYLQLEEN).

The protein localises to the nucleus. The protein resides in the nucleolus. Its function is as follows. Involved in rRNA processing or maturation during ribosome biogenesis. The chain is rRNA biogenesis protein RRP5 from Drosophila melanogaster (Fruit fly).